Here is a 352-residue protein sequence, read N- to C-terminus: UDP-3-O-acylglucosamine N-acyltransferase (352 aa).

The active-site Proton acceptor is the H244.

It belongs to the transferase hexapeptide repeat family. LpxD subfamily. Homotrimer.

The enzyme catalyses a UDP-3-O-[(3R)-3-hydroxyacyl]-alpha-D-glucosamine + a (3R)-hydroxyacyl-[ACP] = a UDP-2-N,3-O-bis[(3R)-3-hydroxyacyl]-alpha-D-glucosamine + holo-[ACP] + H(+). It participates in bacterial outer membrane biogenesis; LPS lipid A biosynthesis. Its function is as follows. Catalyzes the N-acylation of UDP-3-O-acylglucosamine using 3-hydroxyacyl-ACP as the acyl donor. Is involved in the biosynthesis of lipid A, a phosphorylated glycolipid that anchors the lipopolysaccharide to the outer membrane of the cell. The protein is UDP-3-O-acylglucosamine N-acyltransferase of Leptospira biflexa serovar Patoc (strain Patoc 1 / Ames).